The chain runs to 330 residues: D-alanine--D-alanine ligase (330 aa).

In terms of domain architecture, ATP-grasp spans 120-326; it reads KLWYDALGIP…FKTFLQKAVL (207 aa). 150-205 is an ATP binding site; sequence AFKQWGGLFVKAACQGSSVGCYKVTSEAELSKAINDAFGYSQQVLVEKAVKPRELE. Mg(2+) is bound by residues Asp-280, Glu-293, and Asn-295.

This sequence belongs to the D-alanine--D-alanine ligase family. Mg(2+) is required as a cofactor. It depends on Mn(2+) as a cofactor.

The protein resides in the cytoplasm. The catalysed reaction is 2 D-alanine + ATP = D-alanyl-D-alanine + ADP + phosphate + H(+). It participates in cell wall biogenesis; peptidoglycan biosynthesis. In terms of biological role, cell wall formation. The polypeptide is D-alanine--D-alanine ligase (Aliivibrio fischeri (strain ATCC 700601 / ES114) (Vibrio fischeri)).